The following is a 185-amino-acid chain: MPRLFLFHLLEFCLLLNQFSRAVAAKWKDDVIKLCGRELVRAQIAICGMSTWSKRSLSQEDAPQTPRPVAEIVPSFINKDTETIIIMLEFIANLPPELKAALSERQPSLPELQQYVPALKDSNLSFEEFKKLIRNRQSEAADSNPSELKYLGLDTHSQKKRRPYVALFEKCCLIGCTKRSLAKYC.

The N-terminal stretch at 1–22 is a signal peptide; sequence MPRLFLFHLLEFCLLLNQFSRA. Intrachain disulfides connect Cys-35-Cys-172, Cys-47-Cys-185, and Cys-171-Cys-176. The propeptide at 56–158 is connecting peptide; sequence SLSQEDAPQT…KYLGLDTHSQ (103 aa).

Belongs to the insulin family. As to quaternary structure, heterodimer of a B chain and an A chain linked by two disulfide bonds. As to expression, prostate. Not expressed in placenta, decidua or ovary.

The protein localises to the secreted. Functionally, relaxin is an ovarian hormone that acts with estrogen to produce dilatation of the birth canal in many mammals. May be involved in remodeling of connective tissues during pregnancy, promoting growth of pubic ligaments and ripening of the cervix. The chain is Prorelaxin H1 (RLN1) from Homo sapiens (Human).